The following is an 874-amino-acid chain: Mannuronan C5-epimerase AlgE6 (874 aa).

PbH1 repeat units lie at residues 133–155 (DRNV…DPHE), 157–179 (TINL…VADY), 180–202 (QIGG…NIVT), 204–226 (TNDF…VVQR), 234–256 (PENI…LVKM), 257–279 (SNNV…RVYG), 280–302 (AQGV…APEV), and 320–351 (TLNT…DFSS). Hemolysin-type calcium-binding repeat units follow at residues 383-394 (GTDGNDVLIGSD), 401-417 (GGAG…DDLL), 419-435 (GGAG…ADTF), 562-578 (GGGG…GDLL), 580-596 (GGAG…ADTF), 723-739 (GGGG…NDLL), and 741-757 (GGAG…ADTF). A disordered region spans residues 401-420 (GGAGDDRLDGGAGDDLLDGG).

It belongs to the D-mannuronate C5-epimerase family. Requires Ca(2+) as cofactor.

The protein resides in the secreted. The catalysed reaction is [(1-&gt;4)-beta-D-mannuronosyl](n) = [alginate](n). Its pathway is glycan biosynthesis; alginate biosynthesis. Its activity is regulated as follows. Inhibited by zinc. Functionally, converts beta-D-mannuronic acid (M) to alpha-L-guluronic acid (G), producing a polymer with gel-forming capacity, required for the formation of the cyst coat. The sequence is that of Mannuronan C5-epimerase AlgE6 from Azotobacter vinelandii.